The sequence spans 484 residues: Glycogen synthase (484 aa).

Lys15 contacts ADP-alpha-D-glucose.

The protein belongs to the glycosyltransferase 1 family. Bacterial/plant glycogen synthase subfamily.

It carries out the reaction [(1-&gt;4)-alpha-D-glucosyl](n) + ADP-alpha-D-glucose = [(1-&gt;4)-alpha-D-glucosyl](n+1) + ADP + H(+). It functions in the pathway glycan biosynthesis; glycogen biosynthesis. In terms of biological role, synthesizes alpha-1,4-glucan chains using ADP-glucose. The sequence is that of Glycogen synthase from Bacillus licheniformis (strain ATCC 14580 / DSM 13 / JCM 2505 / CCUG 7422 / NBRC 12200 / NCIMB 9375 / NCTC 10341 / NRRL NRS-1264 / Gibson 46).